A 2464-amino-acid chain; its full sequence is Highly reducing polyketide synthase xilA (2464 aa).

A Ketosynthase family 3 (KS3) domain is found at 9–437 (HDPIALVGIG…GTNGHCIIDH (429 aa)). Residues cysteine 182, histidine 318, and histidine 360 each act as for beta-ketoacyl synthase activity in the active site. A compositionally biased stretch (low complexity) spans 461–487 (QNGINGTNGTNGTNGTNGTNGTNGTNG). Residues 461 to 495 (QNGINGTNGTNGTNGTNGTNGTNGTNGHHNPKTEA) form a disordered region. Residues 589 to 911 (FIFTGQGAQW…LKRNEDAQRL (323 aa)) form the Malonyl-CoA:ACP transacylase (MAT) domain. The segment at 983–1121 (HDLLGSKVPG…GQIKIEVSTF (139 aa)) is N-terminal hotdog fold. A PKS/mFAS DH domain is found at 983-1286 (HDLLGSKVPG…FTSLNNEQES (304 aa)). Histidine 1015 (proton acceptor; for dehydratase activity) is an active-site residue. A C-terminal hotdog fold region spans residues 1133 to 1286 (GRLVDAQTWY…FTSLNNEQES (154 aa)). Aspartate 1199 functions as the Proton donor; for dehydratase activity in the catalytic mechanism. The tract at residues 1282 to 1490 (NEQESTSTGD…TEPAHHSTIT (209 aa)) is methyltransferase (CMeT) domain. The region spanning 1716-2028 (GILTSLYFKP…KGTHIGKMVI (313 aa)) is the Enoyl reductase (ER) domain. The Ketoreductase (KR) domain occupies 2052-2231 (ANYILVGGMS…ATTVSLGFIN (180 aa)). In terms of domain architecture, Carrier spans 2383 to 2461 (ETVTFVTDAI…SIAQVIVEEA (79 aa)). Serine 2420 is modified (O-(pantetheine 4'-phosphoryl)serine).

Pantetheine 4'-phosphate serves as cofactor.

The protein operates within secondary metabolite biosynthesis. Functionally, highly reducing polyketide synthase; part of the gene cluster that mediates the biosynthesis of the 6-methyl-2-pyrone derivative xylariolide D. XilA produces the 5-alkyl-6-methyl-2-pyrone backbone called prexylariolide D via sequential condensations of 4 malonyl-CoA units with one acetyl-CoA starter unit. During the biosynthesis, the linear polyketide chain is branched by the addition of an acetyl unit as the origin of the methyl group at the 2-pyrone ring. Prexylariolide D is then hydroxylated at the side chain by xilC to form the final product, xylariolide D. The sequence is that of Highly reducing polyketide synthase xilA from Penicillium rubens (strain ATCC 28089 / DSM 1075 / NRRL 1951 / Wisconsin 54-1255) (Penicillium chrysogenum).